The sequence spans 164 residues: Arginine repressor (164 aa).

Belongs to the ArgR family.

It is found in the cytoplasm. Its pathway is amino-acid biosynthesis; L-arginine biosynthesis [regulation]. Functionally, regulates arginine biosynthesis genes. The polypeptide is Arginine repressor (Mycobacterium avium (strain 104)).